The following is a 129-amino-acid chain: Small ribosomal subunit protein uS9 (129 aa).

This sequence belongs to the universal ribosomal protein uS9 family.

This chain is Small ribosomal subunit protein uS9, found in Chlorobium phaeovibrioides (strain DSM 265 / 1930) (Prosthecochloris vibrioformis (strain DSM 265)).